The primary structure comprises 241 residues: Agamous-like MADS-box protein AP1 (241 aa).

The MADS-box domain maps to 1-61; the sequence is MGRGRVQLKR…GKLFEYSTDS (61 aa). Residues 88 to 178 form the K-box domain; the sequence is QGNWSLEYSK…AKEIKEKEKT (91 aa).

In terms of tissue distribution, expressed in tendrils and flowers.

The protein resides in the nucleus. Functionally, probable transcription factor involved in flower development. The polypeptide is Agamous-like MADS-box protein AP1 (Vitis vinifera (Grape)).